The following is a 101-amino-acid chain: Small ribosomal subunit protein uS14 (101 aa).

Belongs to the universal ribosomal protein uS14 family. In terms of assembly, part of the 30S ribosomal subunit. Contacts proteins S3 and S10.

Binds 16S rRNA, required for the assembly of 30S particles and may also be responsible for determining the conformation of the 16S rRNA at the A site. This is Small ribosomal subunit protein uS14 from Stenotrophomonas maltophilia (strain K279a).